Consider the following 197-residue polypeptide: Glycerol-3-phosphate acyltransferase (197 aa).

Helical transmembrane passes span 5 to 25 (LILI…VGKI), 70 to 90 (LPVL…AVIG), 111 to 131 (VMLF…FIVL), and 153 to 173 (IFFT…AFIF).

It belongs to the PlsY family. Probably interacts with PlsX.

Its subcellular location is the cell membrane. It catalyses the reaction an acyl phosphate + sn-glycerol 3-phosphate = a 1-acyl-sn-glycero-3-phosphate + phosphate. Its pathway is lipid metabolism; phospholipid metabolism. In terms of biological role, catalyzes the transfer of an acyl group from acyl-phosphate (acyl-PO(4)) to glycerol-3-phosphate (G3P) to form lysophosphatidic acid (LPA). This enzyme utilizes acyl-phosphate as fatty acyl donor, but not acyl-CoA or acyl-ACP. This is Glycerol-3-phosphate acyltransferase from Geobacillus sp. (strain WCH70).